The sequence spans 274 residues: Shikimate dehydrogenase (NADP(+)) (274 aa).

Residues 14-16 and threonine 61 contribute to the shikimate site; that span reads SKS. Lysine 65 (proton acceptor) is an active-site residue. Shikimate is bound by residues asparagine 86 and aspartate 102. NADP(+)-binding positions include 126–130, 150–155, and methionine 214; these read GAGGA and NRTAEK. Position 216 (tyrosine 216) interacts with shikimate. Residue glycine 239 participates in NADP(+) binding.

Belongs to the shikimate dehydrogenase family. Homodimer.

The enzyme catalyses shikimate + NADP(+) = 3-dehydroshikimate + NADPH + H(+). It functions in the pathway metabolic intermediate biosynthesis; chorismate biosynthesis; chorismate from D-erythrose 4-phosphate and phosphoenolpyruvate: step 4/7. In terms of biological role, involved in the biosynthesis of the chorismate, which leads to the biosynthesis of aromatic amino acids. Catalyzes the reversible NADPH linked reduction of 3-dehydroshikimate (DHSA) to yield shikimate (SA). The chain is Shikimate dehydrogenase (NADP(+)) from Pseudoalteromonas translucida (strain TAC 125).